The sequence spans 440 residues: MNVQLNSLSDTRKSLVVSLEASEVDAAHQEVVAEFARQARIPGFRPGKAPAAIIAKRFAKDITDEFKQRVVTKAYRDGLEKQKLDVLTVVNVEPGEVAQGKPASVTITVDVRPDFKLPDYVGLPTSVAPSEATEDEVDRVIEGMRAERAEFKVAERPAAKGDYVKLAYEGKIDGKPIAEIAPDKQIYSKVPQTWEEVEGANEGVIPGLGKQLAGLKVGDKKDVEIDFPADFAAVPELAGKKAVYAAEVLEVRERVLPPLDEAFFKAQHVGNLETLKVSVRSEIKRRKEAQNRAEQRRQVTDALTAKVDFPIPESLIESETQTVLRSFIEENMRRGVPQEQFEKDKKELFEGARQAATKRVKSRLVLAKIAEAEKVEVNEQDIDAFIYREAMRTGQKPDKLVKMLTTDREQLRAVQQSIIFDKAIDFLVSKATVTTVQPKG.

Residues 161–257 (GDYVKLAYEG…VLEVRERVLP (97 aa)) enclose the PPIase FKBP-type domain.

This sequence belongs to the FKBP-type PPIase family. Tig subfamily.

It localises to the cytoplasm. The catalysed reaction is [protein]-peptidylproline (omega=180) = [protein]-peptidylproline (omega=0). In terms of biological role, involved in protein export. Acts as a chaperone by maintaining the newly synthesized protein in an open conformation. Functions as a peptidyl-prolyl cis-trans isomerase. The protein is Trigger factor of Opitutus terrae (strain DSM 11246 / JCM 15787 / PB90-1).